Consider the following 306-residue polypeptide: MELVFLGTGAGLPSKTRNVSAVALNMTQEINEVWLFDCGEATQHQILHTNLKPRKITKIFITHLHGDHIYGLPGFLSSRSFQSGENQPLCIYGPIGIKEFVESTLRLSQTNLTYPITIKEITEDGNLFETNEMMVETKKLQHGIDSYGYRIKEKDKPGELLVDKLKQIGIAPGPIYQQIKENEITTLDNGSIIYRNDVLGPAKKGKVISILGDTRYSIDHIPFIKFSDILVHESTFTQDKELLAFEYNHSTNVQAAKLAKEANINKLYLTHVSSRYQAEDIDSIIEEARKIFPSTWLANDFSVYEI.

7 residues coordinate Zn(2+): H63, H65, D67, H68, H142, D213, and H271. D67 (proton acceptor) is an active-site residue.

Belongs to the RNase Z family. As to quaternary structure, homodimer. Zn(2+) is required as a cofactor.

It catalyses the reaction Endonucleolytic cleavage of RNA, removing extra 3' nucleotides from tRNA precursor, generating 3' termini of tRNAs. A 3'-hydroxy group is left at the tRNA terminus and a 5'-phosphoryl group is left at the trailer molecule.. Zinc phosphodiesterase, which displays some tRNA 3'-processing endonuclease activity. Probably involved in tRNA maturation, by removing a 3'-trailer from precursor tRNA. This is Ribonuclease Z from Oceanobacillus iheyensis (strain DSM 14371 / CIP 107618 / JCM 11309 / KCTC 3954 / HTE831).